The chain runs to 338 residues: Aspartate carbamoyltransferase catalytic subunit (338 aa).

Carbamoyl phosphate-binding residues include R71 and T72. K99 is an L-aspartate binding site. Carbamoyl phosphate-binding residues include R121, H151, and Q154. The L-aspartate site is built by R184 and R239. 2 residues coordinate carbamoyl phosphate: G280 and P281.

It belongs to the aspartate/ornithine carbamoyltransferase superfamily. ATCase family. As to quaternary structure, heterododecamer (2C3:3R2) of six catalytic PyrB chains organized as two trimers (C3), and six regulatory PyrI chains organized as three dimers (R2).

The catalysed reaction is carbamoyl phosphate + L-aspartate = N-carbamoyl-L-aspartate + phosphate + H(+). It participates in pyrimidine metabolism; UMP biosynthesis via de novo pathway; (S)-dihydroorotate from bicarbonate: step 2/3. In terms of biological role, catalyzes the condensation of carbamoyl phosphate and aspartate to form carbamoyl aspartate and inorganic phosphate, the committed step in the de novo pyrimidine nucleotide biosynthesis pathway. This chain is Aspartate carbamoyltransferase catalytic subunit, found in Stutzerimonas stutzeri (strain A1501) (Pseudomonas stutzeri).